Consider the following 263-residue polypeptide: Transcription factor bHLH27 (263 aa).

Over residues 32 to 47 (EAFSGSGESSSPDGAA) the composition is skewed to low complexity. The segment at 32-61 (EAFSGSGESSSPDGAATSPASSKNVVSERN) is disordered. Over residues 49–58 (SPASSKNVVS) the composition is skewed to polar residues. The bHLH domain occupies 50 to 99 (PASSKNVVSERNRRQKLNQRLFALRSVVPNISKLDKASVIKDSIDYMQEL).

Homodimer. Expressed constitutively in roots, leaves, stems, and flowers.

The protein localises to the nucleus. The polypeptide is Transcription factor bHLH27 (BHLH27) (Arabidopsis thaliana (Mouse-ear cress)).